The sequence spans 117 residues: Large ribosomal subunit protein bL20 (117 aa).

It belongs to the bacterial ribosomal protein bL20 family.

Its function is as follows. Binds directly to 23S ribosomal RNA and is necessary for the in vitro assembly process of the 50S ribosomal subunit. It is not involved in the protein synthesizing functions of that subunit. In Wolinella succinogenes (strain ATCC 29543 / DSM 1740 / CCUG 13145 / JCM 31913 / LMG 7466 / NCTC 11488 / FDC 602W) (Vibrio succinogenes), this protein is Large ribosomal subunit protein bL20.